A 217-amino-acid polypeptide reads, in one-letter code: 3,4-dihydroxy-2-butanone 4-phosphate synthase (217 aa).

D-ribulose 5-phosphate-binding positions include 37-38 (RE), aspartate 42, 150-154 (RGGHT), and glutamate 174. Residue glutamate 38 coordinates Mg(2+). Residue histidine 153 coordinates Mg(2+).

The protein belongs to the DHBP synthase family. Homodimer. It depends on Mg(2+) as a cofactor. Mn(2+) serves as cofactor.

The catalysed reaction is D-ribulose 5-phosphate = (2S)-2-hydroxy-3-oxobutyl phosphate + formate + H(+). It functions in the pathway cofactor biosynthesis; riboflavin biosynthesis; 2-hydroxy-3-oxobutyl phosphate from D-ribulose 5-phosphate: step 1/1. Functionally, catalyzes the conversion of D-ribulose 5-phosphate to formate and 3,4-dihydroxy-2-butanone 4-phosphate. This chain is 3,4-dihydroxy-2-butanone 4-phosphate synthase, found in Escherichia fergusonii (strain ATCC 35469 / DSM 13698 / CCUG 18766 / IAM 14443 / JCM 21226 / LMG 7866 / NBRC 102419 / NCTC 12128 / CDC 0568-73).